Consider the following 293-residue polypeptide: Protease HtpX homolog (293 aa).

2 consecutive transmembrane segments (helical) span residues 4 to 24 (IFLF…TMRI) and 38 to 58 (LTGL…ISLL). Zn(2+) is bound at residue His-146. The active site involves Glu-147. A Zn(2+)-binding site is contributed by His-150. 2 consecutive transmembrane segments (helical) span residues 161-181 (LIQG…GYFV) and 198-218 (ATVI…VAWF). Glu-223 provides a ligand contact to Zn(2+).

It belongs to the peptidase M48B family. The cofactor is Zn(2+).

The protein localises to the cell inner membrane. The sequence is that of Protease HtpX homolog from Bordetella parapertussis (strain 12822 / ATCC BAA-587 / NCTC 13253).